The chain runs to 487 residues: N-succinylglutamate 5-semialdehyde dehydrogenase (487 aa).

Residue G221–G226 coordinates NAD(+). Catalysis depends on residues E244 and C278.

Belongs to the aldehyde dehydrogenase family. AstD subfamily.

It carries out the reaction N-succinyl-L-glutamate 5-semialdehyde + NAD(+) + H2O = N-succinyl-L-glutamate + NADH + 2 H(+). Its pathway is amino-acid degradation; L-arginine degradation via AST pathway; L-glutamate and succinate from L-arginine: step 4/5. Catalyzes the NAD-dependent reduction of succinylglutamate semialdehyde into succinylglutamate. The sequence is that of N-succinylglutamate 5-semialdehyde dehydrogenase from Burkholderia thailandensis (strain ATCC 700388 / DSM 13276 / CCUG 48851 / CIP 106301 / E264).